The sequence spans 85 residues: DNA-directed RNA polymerase subunit beta'' (85 aa).

It belongs to the RNA polymerase beta' chain family. RpoC2 subfamily. In terms of assembly, in plastids the minimal PEP RNA polymerase catalytic core is composed of four subunits: alpha, beta, beta', and beta''. When a (nuclear-encoded) sigma factor is associated with the core the holoenzyme is formed, which can initiate transcription.

It localises to the plastid. It is found in the chloroplast. The catalysed reaction is RNA(n) + a ribonucleoside 5'-triphosphate = RNA(n+1) + diphosphate. In terms of biological role, DNA-dependent RNA polymerase catalyzes the transcription of DNA into RNA using the four ribonucleoside triphosphates as substrates. In Galdieria sulphuraria (Red alga), this protein is DNA-directed RNA polymerase subunit beta'' (rpoC2).